Here is a 902-residue protein sequence, read N- to C-terminus: Protein translocase subunit SecA (902 aa).

ATP-binding positions include glutamine 87, 105-109 (GEGKT), and aspartate 512. A disordered region spans residues 836–902 (DVEKVEEQHR…KFKQCCGKLK (67 aa)). The span at 840–863 (VEEQHRKSENAPREYQHEEVEHVG) shows a compositional bias: basic and acidic residues. Cysteine 886, cysteine 888, cysteine 897, and cysteine 898 together coordinate Zn(2+).

Belongs to the SecA family. In terms of assembly, monomer and homodimer. Part of the essential Sec protein translocation apparatus which comprises SecA, SecYEG and auxiliary proteins SecDF-YajC and YidC. Zn(2+) serves as cofactor.

It localises to the cell inner membrane. The protein resides in the cytoplasm. It catalyses the reaction ATP + H2O + cellular proteinSide 1 = ADP + phosphate + cellular proteinSide 2.. Its function is as follows. Part of the Sec protein translocase complex. Interacts with the SecYEG preprotein conducting channel. Has a central role in coupling the hydrolysis of ATP to the transfer of proteins into and across the cell membrane, serving both as a receptor for the preprotein-SecB complex and as an ATP-driven molecular motor driving the stepwise translocation of polypeptide chains across the membrane. The polypeptide is Protein translocase subunit SecA (Pseudoalteromonas translucida (strain TAC 125)).